A 401-amino-acid chain; its full sequence is MAKQKFERTKPHVNVGTIGHVDHGKTTLTAAITKVLALQGAAQFVSYDQIDNAPEERARGITIAIRHVEYQTARRHYAHVDCPGHADYIKNMITGAAQMDGAILVVSAPDGPMPQTREHVLLARQVQVPAMVVFLNKVDMMDDEELLELVELELRELLSNHGFPGDEVPIVRGSALAALSSASTDINAPEYKCILDLMNAVDEYIPTPVREIDKPFLMPIEDVFGIKGRGTVVTGRIERGKVKMGDTVEIIGMTHEAPRRTVVTGVEMFQKTLDEGIAGDNVGVLLRGIERTEVERGQVLAAPGSIKPHATFKANVYVLKKEEGGRHTPFFSGYRPQFYIRTTDVTGAIHLPEGVEMVMPGDNIEMTVELIVPVAIEEGLRFAIREGGRTVGAGVVSAIVD.

The tr-type G domain occupies 10 to 209; the sequence is KPHVNVGTIG…AVDEYIPTPV (200 aa). Positions 19–26 are G1; it reads GHVDHGKT. GTP is bound at residue 19-26; sequence GHVDHGKT. Threonine 26 is a binding site for Mg(2+). The segment at 60 to 64 is G2; that stretch reads GITIA. Residues 81–84 are G3; sequence DCPG. Residues 81–85 and 136–139 each bind GTP; these read DCPGH and NKVD. A G4 region spans residues 136–139; sequence NKVD. The G5 stretch occupies residues 174-176; it reads SAL.

The protein belongs to the TRAFAC class translation factor GTPase superfamily. Classic translation factor GTPase family. EF-Tu/EF-1A subfamily. As to quaternary structure, monomer.

The protein localises to the cytoplasm. It catalyses the reaction GTP + H2O = GDP + phosphate + H(+). In terms of biological role, GTP hydrolase that promotes the GTP-dependent binding of aminoacyl-tRNA to the A-site of ribosomes during protein biosynthesis. The chain is Elongation factor Tu 2 from Roseiflexus sp. (strain RS-1).